Consider the following 117-residue polypeptide: Ribonuclease P protein component (117 aa).

This sequence belongs to the RnpA family. Consists of a catalytic RNA component (M1 or rnpB) and a protein subunit.

The catalysed reaction is Endonucleolytic cleavage of RNA, removing 5'-extranucleotides from tRNA precursor.. Its function is as follows. RNaseP catalyzes the removal of the 5'-leader sequence from pre-tRNA to produce the mature 5'-terminus. It can also cleave other RNA substrates such as 4.5S RNA. The protein component plays an auxiliary but essential role in vivo by binding to the 5'-leader sequence and broadening the substrate specificity of the ribozyme. The protein is Ribonuclease P protein component of Lactococcus lactis subsp. lactis (strain IL1403) (Streptococcus lactis).